The sequence spans 168 residues: Cytochrome c-type biogenesis protein CcmE (168 aa).

Residues 1-7 (MTRKQRR) are Cytoplasmic-facing. A helical; Signal-anchor for type II membrane protein membrane pass occupies residues 8-28 (LMLIGVCGAVLAVALGLVLWA). At 29-168 (MRGTIVFFRS…SGEKPALRQQ (140 aa)) the chain is on the periplasmic side. Residues H122 and Y126 each contribute to the heme site. Positions 134 to 168 (ALKKQGHWQGEAKHPGGTAPAPQTASGEKPALRQQ) are disordered.

It belongs to the CcmE/CycJ family.

It is found in the cell inner membrane. Functionally, heme chaperone required for the biogenesis of c-type cytochromes. Transiently binds heme delivered by CcmC and transfers the heme to apo-cytochromes in a process facilitated by CcmF and CcmH. This Methylobacterium nodulans (strain LMG 21967 / CNCM I-2342 / ORS 2060) protein is Cytochrome c-type biogenesis protein CcmE.